Consider the following 1604-residue polypeptide: Collagen alpha-1(XVI) chain (1604 aa).

The first 21 residues, Met1–Gly21, serve as a signal peptide directing secretion. A glycan (N-linked (GlcNAc...) asparagine) is linked at Asn47. The Laminin G-like domain maps to Gly50 to Pro231. The interval Glu232 to Glu374 is nonhelical region 10 (NC10). A compositionally biased stretch (basic and acidic residues) spans Ala301 to Thr311. Residues Ala301–Val509 form a disordered region. An N-linked (GlcNAc...) asparagine glycan is attached at Asn327. Residues Gly375–Gly423 enclose the Collagen-like 1 domain. The interval Gly375 to Pro506 is triple-helical region 9 (COL9) with 3 imperfections. Low complexity predominate over residues Ser383 to Glu397. The span at Lys398–Gly407 shows a compositional bias: basic and acidic residues. Residues Pro449–Ile460 show a composition bias toward pro residues. Positions Gly486–Gly495 are enriched in gly residues. The tract at residues Cys507–Val521 is nonhelical region 9 (NC9). The triple-helical region 8 (COL8) with 1 imperfection stretch occupies residues Gly522–Pro555. Positions Arg540–Asp542 match the Cell attachment site motif. Residues Cys556–Thr572 form a nonhelical region 8 (NC8) region. The segment at Gly573 to Pro631 is triple-helical region 7 (COL7) with 1 imperfection. 2 consecutive Collagen-like domains span residues Gly573–Glu633 and Gly667–Gly721. The segment at Phe604–Pro917 is disordered. Residues Cys632–Pro652 form a nonhelical region 7 (NC7) region. A triple-helical region 6 (COL6) with 1 imperfection region spans residues Gly653–Gly723. Residues Lys674–Lys684 are compositionally biased toward basic and acidic residues. Residues Asp686–Pro702 are compositionally biased toward low complexity. Positions Cys724 to Ala738 are nonhelical region 6 (NC6). Residues Gly739–Cys876 form a triple-helical region 5 (COL5) with 3 imperfections region. Low complexity-rich tracts occupy residues Leu766–Glu781, Pro792–Pro808, and Pro826–Pro846. The Collagen-like 4 domain occupies Gly788–Ala840. The span at Lys864–Pro873 shows a compositional bias: basic and acidic residues. The segment at Ser877 to Ser887 is nonhelical region 5 (NC5). Positions Gly888 to Leu938 constitute a Collagen-like 5 domain. Positions Gly888–Thr939 are triple-helical region 4 (COL4) with 2 imperfections. Pro residues predominate over residues Pro905–Pro917. The interval Ala940–Lys973 is nonhelical region 4 (NC4). The interval Gly974–Asp988 is triple-helical region 3 (COL3). The nonhelical region 3 (NC3) stretch occupies residues Asn989 to Glu1011. 2 disordered regions span residues Arg1001–Ser1429 and Met1468–Lys1517. Residues Arg1006–Asp1008 carry the Cell attachment site motif. A triple-helical region 2 (COL2) with 2 imperfections region spans residues Gly1012–Met1433. One can recognise a Collagen-like 6 domain in the interval Gly1018 to Gly1075. Composition is skewed to pro residues over residues Pro1044–Phe1055, Phe1160–Phe1169, and Ser1199–Ile1208. Positions Leu1217–Leu1226 are enriched in basic and acidic residues. The short motif at Arg1227–Asp1229 is the Cell attachment site element. A compositionally biased stretch (low complexity) spans Arg1271–Gln1284. Pro residues-rich tracts occupy residues Arg1286–Pro1302 and Gln1330–Glu1342. Low complexity predominate over residues Asp1369–Gln1378. Residues Gly1386 to Gly1395 are compositionally biased toward gly residues. Residues Ser1420–Ser1429 are compositionally biased toward low complexity. The segment at Val1434–Pro1472 is nonhelical region 2 (NC2). Collagen-like domains are found at residues Pro1472–Gly1524 and Ala1528–Gly1576. Positions Gly1473–Cys1578 are triple-helical region 1 (COL1) with 2 imperfections. The nonhelical region 1 (NC1) stretch occupies residues Asn1579–Gly1604.

It belongs to the fibril-associated collagens with interrupted helices (FACIT) family. As to quaternary structure, homotrimer. Interacts with FBN1, fibronectin and integrins ITGA1/ITGB1 and ITGA2/ITGB1. Integrin ITGA1/ITGB1 binds to a unique site within COL16A1 located close to its C-terminal end between collagenous domains COL1-COL3. Prolines at the third position of the tripeptide repeating unit (G-X-Y) are hydroxylated in some or all of the chains. Post-translationally, glycosylated. In papillary dermis, is a component of specialized fibrillin-1-containing microfibrils, whereas in territorial cartilage matrix, it is localized to a discrete population of thin, weakly banded collagen fibrils in association with other collagens (at protein level). In the placenta, where it is found in the amnion, a membranous tissue lining the amniotic cavity. Within the amnion, it is found in an acellular, relatively dense layer of a complex network of reticular fibers. Also located to a fibroblast layer beneath this dense layer. Exists in tissues in association with other types of collagen.

It is found in the secreted. The protein resides in the extracellular space. It localises to the extracellular matrix. Involved in mediating cell attachment and inducing integrin-mediated cellular reactions, such as cell spreading and alterations in cell morphology. The protein is Collagen alpha-1(XVI) chain (COL16A1) of Homo sapiens (Human).